Here is a 321-residue protein sequence, read N- to C-terminus: MTKPITVQPGVQLRDADKMALIPVKFLPEQEGEQLKKPDWMRIRLPKTDEKIQNVKNIMRKNNLHSVCEEASCPNLSECFNHGTATFMILGAICTRHCPFCDVAHGKPLAPDADEPKKLANTIREMALKYVVITSVDRDDLRDGGAQHFADCIREIRLASPNTRIETLTPDFRGRMDKALDVFRETPPDVFNHNLETAPRLYSMARPGADYAWSLKLLQKMKELHPDLPTKSGLMMGLGETNDEIVQVLKDLRAHGVTMLTLGQYLQPSRHHLPVKRYVPPQEFDELKAIALDLGFTHAACGPFVRSSYHADLQAQGQEVK.

[4Fe-4S] cluster-binding residues include C68, C73, C79, C94, C98, C101, and S308. Residues 80–297 form the Radical SAM core domain; it reads FNHGTATFMI…KAIALDLGFT (218 aa).

This sequence belongs to the radical SAM superfamily. Lipoyl synthase family. Requires [4Fe-4S] cluster as cofactor.

The protein resides in the cytoplasm. It carries out the reaction [[Fe-S] cluster scaffold protein carrying a second [4Fe-4S](2+) cluster] + N(6)-octanoyl-L-lysyl-[protein] + 2 oxidized [2Fe-2S]-[ferredoxin] + 2 S-adenosyl-L-methionine + 4 H(+) = [[Fe-S] cluster scaffold protein] + N(6)-[(R)-dihydrolipoyl]-L-lysyl-[protein] + 4 Fe(3+) + 2 hydrogen sulfide + 2 5'-deoxyadenosine + 2 L-methionine + 2 reduced [2Fe-2S]-[ferredoxin]. The protein operates within protein modification; protein lipoylation via endogenous pathway; protein N(6)-(lipoyl)lysine from octanoyl-[acyl-carrier-protein]: step 2/2. Functionally, catalyzes the radical-mediated insertion of two sulfur atoms into the C-6 and C-8 positions of the octanoyl moiety bound to the lipoyl domains of lipoate-dependent enzymes, thereby converting the octanoylated domains into lipoylated derivatives. The polypeptide is Lipoyl synthase (Tolumonas auensis (strain DSM 9187 / NBRC 110442 / TA 4)).